Consider the following 877-residue polypeptide: Leucine--tRNA ligase (877 aa).

Positions 48-58 (PYPSGKLHMGH) match the 'HIGH' region motif. The 'KMSKS' region motif lies at 636-640 (KMSKS). Lys639 provides a ligand contact to ATP.

The protein belongs to the class-I aminoacyl-tRNA synthetase family.

It localises to the cytoplasm. It carries out the reaction tRNA(Leu) + L-leucine + ATP = L-leucyl-tRNA(Leu) + AMP + diphosphate. In Ralstonia nicotianae (strain ATCC BAA-1114 / GMI1000) (Ralstonia solanacearum), this protein is Leucine--tRNA ligase.